The primary structure comprises 683 residues: Eukaryotic translation initiation factor 3 subunit B (683 aa).

The segment at Met-1–Asp-25 is disordered. Residues Gln-9 to Asp-25 show a composition bias toward acidic residues. Residues Asn-49 to Asp-133 form the RRM domain. WD repeat units lie at residues Lys-199–Lys-238, Ala-240–Thr-279, Asp-283–Met-321, Ile-324–Ala-359, Glu-435–Leu-477, and Gly-522–Asn-567. The stretch at Met-611 to Lys-638 forms a coiled coil.

The protein belongs to the eIF-3 subunit B family. In terms of assembly, component of the eukaryotic translation initiation factor 3 (eIF-3) complex.

Its subcellular location is the cytoplasm. In terms of biological role, RNA-binding component of the eukaryotic translation initiation factor 3 (eIF-3) complex, which is involved in protein synthesis of a specialized repertoire of mRNAs and, together with other initiation factors, stimulates binding of mRNA and methionyl-tRNAi to the 40S ribosome. The eIF-3 complex specifically targets and initiates translation of a subset of mRNAs involved in cell proliferation. The polypeptide is Eukaryotic translation initiation factor 3 subunit B (Anopheles gambiae (African malaria mosquito)).